The chain runs to 222 residues: UPF0758 protein Ppha_0935 (222 aa).

The region spanning 100–222 is the MPN domain; it reads KIQAARDVFE…CFSFRESGLL (123 aa). Zn(2+) contacts are provided by histidine 171, histidine 173, and aspartate 184. The JAMM motif signature appears at 171-184; it reads HNHPSGDVEPSNAD.

Belongs to the UPF0758 family.

The sequence is that of UPF0758 protein Ppha_0935 from Pelodictyon phaeoclathratiforme (strain DSM 5477 / BU-1).